The chain runs to 213 residues: Phosphoribosylformylglycinamidine synthase subunit PurQ (213 aa).

Residues 5-213 (ACVVVYPGSN…FQSILNYLKR (209 aa)) enclose the Glutamine amidotransferase type-1 domain. Cysteine 86 serves as the catalytic Nucleophile. Residues histidine 186 and glutamate 188 contribute to the active site.

As to quaternary structure, part of the FGAM synthase complex composed of 1 PurL, 1 PurQ and 2 PurS subunits.

It is found in the cytoplasm. The enzyme catalyses N(2)-formyl-N(1)-(5-phospho-beta-D-ribosyl)glycinamide + L-glutamine + ATP + H2O = 2-formamido-N(1)-(5-O-phospho-beta-D-ribosyl)acetamidine + L-glutamate + ADP + phosphate + H(+). It catalyses the reaction L-glutamine + H2O = L-glutamate + NH4(+). The protein operates within purine metabolism; IMP biosynthesis via de novo pathway; 5-amino-1-(5-phospho-D-ribosyl)imidazole from N(2)-formyl-N(1)-(5-phospho-D-ribosyl)glycinamide: step 1/2. In terms of biological role, part of the phosphoribosylformylglycinamidine synthase complex involved in the purines biosynthetic pathway. Catalyzes the ATP-dependent conversion of formylglycinamide ribonucleotide (FGAR) and glutamine to yield formylglycinamidine ribonucleotide (FGAM) and glutamate. The FGAM synthase complex is composed of three subunits. PurQ produces an ammonia molecule by converting glutamine to glutamate. PurL transfers the ammonia molecule to FGAR to form FGAM in an ATP-dependent manner. PurS interacts with PurQ and PurL and is thought to assist in the transfer of the ammonia molecule from PurQ to PurL. The chain is Phosphoribosylformylglycinamidine synthase subunit PurQ from Thermotoga maritima (strain ATCC 43589 / DSM 3109 / JCM 10099 / NBRC 100826 / MSB8).